The sequence spans 862 residues: DNA mismatch repair protein MutS (862 aa).

618 to 625 (GPNMGGKS) lines the ATP pocket. The segment at 799–824 (QLESRDNQASPAVASAPQQQSLSLSP) is disordered. The span at 806–824 (QASPAVASAPQQQSLSLSP) shows a compositional bias: low complexity.

This sequence belongs to the DNA mismatch repair MutS family.

In terms of biological role, this protein is involved in the repair of mismatches in DNA. It is possible that it carries out the mismatch recognition step. This protein has a weak ATPase activity. In Shewanella denitrificans (strain OS217 / ATCC BAA-1090 / DSM 15013), this protein is DNA mismatch repair protein MutS.